A 498-amino-acid chain; its full sequence is Glycerol kinase (498 aa).

Position 12 (T12) interacts with ADP. Residues T12, T13, and S14 each contribute to the ATP site. T12 is a binding site for sn-glycerol 3-phosphate. R16 lines the ADP pocket. R82, E83, Y134, and D243 together coordinate sn-glycerol 3-phosphate. Positions 82, 83, 134, 243, and 244 each coordinate glycerol. T265 and G308 together coordinate ADP. Residues T265, G308, Q312, and G412 each coordinate ATP. G412 is an ADP binding site.

The protein belongs to the FGGY kinase family.

The catalysed reaction is glycerol + ATP = sn-glycerol 3-phosphate + ADP + H(+). It functions in the pathway polyol metabolism; glycerol degradation via glycerol kinase pathway; sn-glycerol 3-phosphate from glycerol: step 1/1. With respect to regulation, inhibited by fructose 1,6-bisphosphate (FBP). Functionally, key enzyme in the regulation of glycerol uptake and metabolism. Catalyzes the phosphorylation of glycerol to yield sn-glycerol 3-phosphate. The polypeptide is Glycerol kinase (Rhizobium rhizogenes (strain K84 / ATCC BAA-868) (Agrobacterium radiobacter)).